A 248-amino-acid chain; its full sequence is Probable transcriptional regulatory protein Fphi_1565 (248 aa).

Belongs to the TACO1 family.

It is found in the cytoplasm. The sequence is that of Probable transcriptional regulatory protein Fphi_1565 from Francisella philomiragia subsp. philomiragia (strain ATCC 25017 / CCUG 19701 / FSC 153 / O#319-036).